The sequence spans 210 residues: MATFKSLTEADLLSFSTGLIAGVDEVGRGPLVGDVVTAAVILDPNKPISGLNDSKKLSEKRREALFDEICDKALCYQVGRASPAEIDELNILHATMLAMQRAVAGLNIAPELVLVDGNRSPIFVAHNGAGLTSHSIIKGDGLIASISAASIIAKVTRDREMDVLDAAYPQYGFAKHRGYPTKAHFEAIAEHGVFDQYRKSFKPVKALLGL.

The RNase H type-2 domain maps to 18–210; sequence GLIAGVDEVG…FKPVKALLGL (193 aa). The a divalent metal cation site is built by D24, E25, and D116.

Belongs to the RNase HII family. The cofactor is Mn(2+). Requires Mg(2+) as cofactor.

Its subcellular location is the cytoplasm. It catalyses the reaction Endonucleolytic cleavage to 5'-phosphomonoester.. Its function is as follows. Endonuclease that specifically degrades the RNA of RNA-DNA hybrids. The polypeptide is Ribonuclease HII (Shewanella baltica (strain OS223)).